We begin with the raw amino-acid sequence, 226 residues long: Ribonuclease HII (226 aa).

Residues 29 to 220 form the RNase H type-2 domain; that stretch reads GPVAGVDEAG…VVAAGVRLEQ (192 aa). Asp35, Glu36, and Asp129 together coordinate a divalent metal cation.

This sequence belongs to the RNase HII family. Mn(2+) serves as cofactor. The cofactor is Mg(2+).

Its subcellular location is the cytoplasm. The catalysed reaction is Endonucleolytic cleavage to 5'-phosphomonoester.. Its function is as follows. Endonuclease that specifically degrades the RNA of RNA-DNA hybrids. The protein is Ribonuclease HII of Rhodococcus erythropolis (strain PR4 / NBRC 100887).